We begin with the raw amino-acid sequence, 184 residues long: Crossover junction endodeoxyribonuclease RuvC (184 aa).

Residues D7, E68, and D141 contribute to the active site. Mg(2+) is bound by residues D7, E68, and D141.

It belongs to the RuvC family. Homodimer which binds Holliday junction (HJ) DNA. The HJ becomes 2-fold symmetrical on binding to RuvC with unstacked arms; it has a different conformation from HJ DNA in complex with RuvA. In the full resolvosome a probable DNA-RuvA(4)-RuvB(12)-RuvC(2) complex forms which resolves the HJ. The cofactor is Mg(2+).

It localises to the cytoplasm. The catalysed reaction is Endonucleolytic cleavage at a junction such as a reciprocal single-stranded crossover between two homologous DNA duplexes (Holliday junction).. In terms of biological role, the RuvA-RuvB-RuvC complex processes Holliday junction (HJ) DNA during genetic recombination and DNA repair. Endonuclease that resolves HJ intermediates. Cleaves cruciform DNA by making single-stranded nicks across the HJ at symmetrical positions within the homologous arms, yielding a 5'-phosphate and a 3'-hydroxyl group; requires a central core of homology in the junction. The consensus cleavage sequence is 5'-(A/T)TT(C/G)-3'. Cleavage occurs on the 3'-side of the TT dinucleotide at the point of strand exchange. HJ branch migration catalyzed by RuvA-RuvB allows RuvC to scan DNA until it finds its consensus sequence, where it cleaves and resolves the cruciform DNA. This Mycobacterium ulcerans (strain Agy99) protein is Crossover junction endodeoxyribonuclease RuvC.